A 382-amino-acid polypeptide reads, in one-letter code: MCLPLILTIKIINIIINMFNKTNKKINILGKTREELYDFFIKIGEEKFRAEQIMKWIYKRYCDDVSLMTDFSKNLKNKLKNIIKIDHLDIESENISQDGTIKWVLKINDQNIETVYIPEINRATLCISSQIGCALNCKFCATSYQGFNRNLNSYEIISQIWYAMKIINDRNNFKLKKITNIVMMGMGEPLLNLKNLVPAIKIILDNYGFGLSKRRITISTAGISPVIKKLGKLIDVKLAISLHAPNDIIRNKIMPINKKYNIKSILLSAKKYISTSKANKGKISIEYIMLNEINDKTEHAYQLINCLKNIPCKINLIPWNPFPYVKYKCSNFNKINNFYKILIKHGITTTIRKQRGIDIKAACGQLSGNVINRINKRNIINF.

E113 functions as the Proton acceptor in the catalytic mechanism. The Radical SAM core domain maps to 119–358; it reads EINRATLCIS…TTIRKQRGID (240 aa). C126 and C363 are disulfide-bonded. [4Fe-4S] cluster-binding residues include C133, C137, and C140. Residues 187–188, S219, 241–243, and N320 contribute to the S-adenosyl-L-methionine site; these read GE and SLH. C363 (S-methylcysteine intermediate) is an active-site residue.

This sequence belongs to the radical SAM superfamily. RlmN family. Requires [4Fe-4S] cluster as cofactor.

The protein localises to the cytoplasm. The enzyme catalyses adenosine(2503) in 23S rRNA + 2 reduced [2Fe-2S]-[ferredoxin] + 2 S-adenosyl-L-methionine = 2-methyladenosine(2503) in 23S rRNA + 5'-deoxyadenosine + L-methionine + 2 oxidized [2Fe-2S]-[ferredoxin] + S-adenosyl-L-homocysteine. It catalyses the reaction adenosine(37) in tRNA + 2 reduced [2Fe-2S]-[ferredoxin] + 2 S-adenosyl-L-methionine = 2-methyladenosine(37) in tRNA + 5'-deoxyadenosine + L-methionine + 2 oxidized [2Fe-2S]-[ferredoxin] + S-adenosyl-L-homocysteine. Its function is as follows. Specifically methylates position 2 of adenine 2503 in 23S rRNA and position 2 of adenine 37 in tRNAs. m2A2503 modification seems to play a crucial role in the proofreading step occurring at the peptidyl transferase center and thus would serve to optimize ribosomal fidelity. This is Dual-specificity RNA methyltransferase RlmN from Wigglesworthia glossinidia brevipalpis.